Reading from the N-terminus, the 229-residue chain is Potassium/proton antiporter CemA (229 aa).

Helical transmembrane passes span 11-31 (TTPFLYLASIVFLPWWISLFF), 118-138 (IISFVILSVCSILGNEELVIL), 158-178 (LLALTDFLFGFHTISAWELLI), and 190-210 (LLVCLFPSVLHTIYYFWTFNY).

It belongs to the CemA family.

The protein localises to the plastid. It localises to the chloroplast inner membrane. The catalysed reaction is K(+)(in) + H(+)(out) = K(+)(out) + H(+)(in). Its function is as follows. Contributes to K(+)/H(+) antiport activity by supporting proton efflux to control proton extrusion and homeostasis in chloroplasts in a light-dependent manner to modulate photosynthesis. Prevents excessive induction of non-photochemical quenching (NPQ) under continuous-light conditions. Indirectly promotes efficient inorganic carbon uptake into chloroplasts. This chain is Potassium/proton antiporter CemA, found in Pelargonium hortorum (Common geranium).